Consider the following 555-residue polypeptide: Dihydroxy-acid dehydratase (555 aa).

Cys46 is a binding site for [2Fe-2S] cluster. Asp78 is a Mg(2+) binding site. [2Fe-2S] cluster is bound at residue Cys119. Residues Asp120 and Lys121 each coordinate Mg(2+). An N6-carboxylysine modification is found at Lys121. Cys191 serves as a coordination point for [2Fe-2S] cluster. Glu442 provides a ligand contact to Mg(2+). Ser468 (proton acceptor) is an active-site residue.

Belongs to the IlvD/Edd family. Homodimer. [2Fe-2S] cluster is required as a cofactor. The cofactor is Mg(2+).

The enzyme catalyses (2R)-2,3-dihydroxy-3-methylbutanoate = 3-methyl-2-oxobutanoate + H2O. The catalysed reaction is (2R,3R)-2,3-dihydroxy-3-methylpentanoate = (S)-3-methyl-2-oxopentanoate + H2O. Its pathway is amino-acid biosynthesis; L-isoleucine biosynthesis; L-isoleucine from 2-oxobutanoate: step 3/4. The protein operates within amino-acid biosynthesis; L-valine biosynthesis; L-valine from pyruvate: step 3/4. In terms of biological role, functions in the biosynthesis of branched-chain amino acids. Catalyzes the dehydration of (2R,3R)-2,3-dihydroxy-3-methylpentanoate (2,3-dihydroxy-3-methylvalerate) into 2-oxo-3-methylpentanoate (2-oxo-3-methylvalerate) and of (2R)-2,3-dihydroxy-3-methylbutanoate (2,3-dihydroxyisovalerate) into 2-oxo-3-methylbutanoate (2-oxoisovalerate), the penultimate precursor to L-isoleucine and L-valine, respectively. The polypeptide is Dihydroxy-acid dehydratase (Thermus thermophilus (strain ATCC BAA-163 / DSM 7039 / HB27)).